A 198-amino-acid chain; its full sequence is Protein hunchback (198 aa).

2 disordered regions span residues 16-117 (SHHH…PMQS) and 152-198 (NDKL…KYMA). Residues 17 to 31 (HHHHHHHAHHSHHQH) are compositionally biased toward basic residues. Composition is skewed to low complexity over residues 35–46 (SNSNSNASSPHQ) and 68–83 (QQQQ…QQQQ). Polar residues predominate over residues 95 to 105 (PSPSNNDQNSP). Positions 179–198 (EPEKEHDLMSNSSEDMKYMA) are enriched in basic and acidic residues.

Belongs to the hunchback C2H2-type zinc-finger protein family.

It localises to the nucleus. Gap class segmentation protein that controls development of head structures. In Drosophila disjuncta (Fruit fly), this protein is Protein hunchback (hb).